Here is a 549-residue protein sequence, read N- to C-terminus: Protein EPD1 (549 aa).

The signal sequence occupies residues 1–22 (MLLNSLFPSILAAATFVTSAAA). N-linked (GlcNAc...) asparagine glycosylation is found at N40 and N59. C72 and C101 are oxidised to a cystine. N147 and N163 each carry an N-linked (GlcNAc...) asparagine glycan. 5 disulfides stabilise this stretch: C214-C347, C232-C263, C369-C420, C378-C444, and C397-C402. Polar residues predominate over residues 336-356 (AESASGVSRTSCPTNTDNWEA). The segment at 336-361 (AESASGVSRTSCPTNTDNWEASTELP) is disordered. N383 carries N-linked (GlcNAc...) asparagine glycosylation. N408 and N438 each carry an N-linked (GlcNAc...) asparagine glycan. Positions 479–519 (SVRTDTSEATTDSGSGSSNSGSASSSKSTSSSTSSGSSGSK) are disordered. A compositionally biased stretch (low complexity) spans 487–519 (ATTDSGSGSSNSGSASSSKSTSSSTSSGSSGSK).

The protein belongs to the glycosyl hydrolase 72 family.

It is found in the cell membrane. This Candida maltosa (Yeast) protein is Protein EPD1 (EPD1).